A 243-amino-acid polypeptide reads, in one-letter code: MTPTPELHGVWQARIITLFPQAFPGVLGESLTGKALQDGLWQLHTTDLRRFGVGKHRNVDDTPAGGGAGMVLRPDVLGAAIEATMQGTSSNWPLIYLSPRGRPMDQALMQSLARCDGVTLLCGRFEGVDERVLEHYGIQEVSLGDFVMTGGEIAAQALIDATVRLLPGVLGNQASTEEESFSSGLLEHPQYTRPAEWMGRPIPEVLMSGHHGKVAEWRRAQSEEITRRRRPDLWQRHQATKDD.

Residues Gly-123 and 143–148 (LGDFVM) each bind S-adenosyl-L-methionine.

This sequence belongs to the RNA methyltransferase TrmD family. As to quaternary structure, homodimer.

It localises to the cytoplasm. It catalyses the reaction guanosine(37) in tRNA + S-adenosyl-L-methionine = N(1)-methylguanosine(37) in tRNA + S-adenosyl-L-homocysteine + H(+). In terms of biological role, specifically methylates guanosine-37 in various tRNAs. In Ruegeria pomeroyi (strain ATCC 700808 / DSM 15171 / DSS-3) (Silicibacter pomeroyi), this protein is tRNA (guanine-N(1)-)-methyltransferase.